The primary structure comprises 170 residues: Negative modulator of initiation of replication (170 aa).

Residues 139-145 form an interaction with DNA region; the sequence is NTNTGRK.

Belongs to the SeqA family. As to quaternary structure, homodimer. Polymerizes to form helical filaments.

It is found in the cytoplasm. Its function is as follows. Negative regulator of replication initiation, which contributes to regulation of DNA replication and ensures that replication initiation occurs exactly once per chromosome per cell cycle. Binds to pairs of hemimethylated GATC sequences in the oriC region, thus preventing assembly of replication proteins and re-initiation at newly replicated origins. Repression is relieved when the region becomes fully methylated. This is Negative modulator of initiation of replication from Tolumonas auensis (strain DSM 9187 / NBRC 110442 / TA 4).